Consider the following 300-residue polypeptide: Nuclear egress protein 1 (300 aa).

A CCCH-type zinc finger spans residues 90-217 (CLSLSGMGYY…YIVFPGKALH (128 aa)).

Belongs to the herpesviridae NEC1 protein family. Forms a heterohexameric complex with NEC2. Interacts with capsid vertex specific component 2/CVC2; this interaction directs the capsid to the host inner nuclear membrane to initiate budding. Post-translationally, phosphorylated at serine residues in the N-terminus. This phosphorylation regulates the localization within the inner nuclear membrane.

The protein resides in the host nucleus inner membrane. Plays an essential role in virion nuclear egress, the first step of virion release from infected cell. Within the host nucleus, NEC1 interacts with the newly formed capsid through the vertexes and directs it to the inner nuclear membrane by associating with NEC2. Induces the budding of the capsid at the inner nuclear membrane as well as its envelopment into the perinuclear space. There, the NEC1/NEC2 complex promotes the fusion of the enveloped capsid with the outer nuclear membrane and the subsequent release of the viral capsid into the cytoplasm where it will reach the secondary budding sites in the host Golgi or trans-Golgi network. This Gallid herpesvirus 2 (strain Chicken/Md5/ATCC VR-987) (GaHV-2) protein is Nuclear egress protein 1.